A 245-amino-acid chain; its full sequence is tRNA pseudouridine synthase A (245 aa).

The Nucleophile role is filled by Asp52. Tyr111 provides a ligand contact to substrate.

Belongs to the tRNA pseudouridine synthase TruA family. Homodimer.

It catalyses the reaction uridine(38/39/40) in tRNA = pseudouridine(38/39/40) in tRNA. Functionally, formation of pseudouridine at positions 38, 39 and 40 in the anticodon stem and loop of transfer RNAs. The chain is tRNA pseudouridine synthase A from Rickettsia felis (strain ATCC VR-1525 / URRWXCal2) (Rickettsia azadi).